The chain runs to 284 residues: MTLLSTLRGISSPARQQPGTQSESRRGGDTLAERGLAVAGVSHGFDGTAVLESVTLAVDRGETVAIIGPSGTGKTTLLRLLALFSEPDDGTIGLDGTDVWRQSERQRLAARRRIGMVFQKANLFDTTVRRNVRYGLSVRRSWRERLRSWLGGRKRQESVFEALDIVGLADAASQSASSLSGGEAQRVAFARALAYDPDFLLLDEPTSDLDPRNTAVIEEAVDAARSRGLGVAVATHDMHQARRIADRIVVLLDGQVIEAGPTERVFSDPDDARARKFINGELVY.

Over residues 1–22 the composition is skewed to polar residues; the sequence is MTLLSTLRGISSPARQQPGTQS. Positions 1-29 are disordered; the sequence is MTLLSTLRGISSPARQQPGTQSESRRGGD. The region spanning 36 to 278 is the ABC transporter domain; the sequence is LAVAGVSHGF…PDDARARKFI (243 aa). 68–75 serves as a coordination point for ATP; the sequence is GPSGTGKT.

Belongs to the ABC transporter superfamily. Phosphate importer (TC 3.A.1.7) family. The complex is composed of two ATP-binding proteins (PstB), two transmembrane proteins (PstC and PstA) and a solute-binding protein (PstS).

It is found in the cell membrane. It catalyses the reaction phosphate(out) + ATP + H2O = ADP + 2 phosphate(in) + H(+). Functionally, part of the ABC transporter complex PstSACB involved in phosphate import. Responsible for energy coupling to the transport system. This chain is Phosphate import ATP-binding protein PstB 2, found in Natronomonas pharaonis (strain ATCC 35678 / DSM 2160 / CIP 103997 / JCM 8858 / NBRC 14720 / NCIMB 2260 / Gabara) (Halobacterium pharaonis).